The following is a 79-amino-acid chain: Protein S100-G (79 aa).

N-acetylserine is present on Ser-2. 2 consecutive EF-hand domains span residues 13-48 (IFQKYAAKEGDPNQLSKEELKLLIQSEFPSLLKASS) and 45-79 (KASSTLDNLFKELDKNGDGEVSYEEFEVFFKKLSQ). Residues Gln-26 and Glu-31 each coordinate Ca(2+). Phosphoserine is present on residues Ser-42 and Ser-47. Asp-58, Asn-60, Asp-62, Glu-64, and Glu-69 together coordinate Ca(2+).

This sequence belongs to the S-100 family.

In Rattus norvegicus (Rat), this protein is Protein S100-G (S100g).